We begin with the raw amino-acid sequence, 288 residues long: Quinate/shikimate dehydrogenase (288 aa).

Substrate is bound by residues lysine 71 and aspartate 107. Residues 132 to 135 (AGGA), 155 to 158 (NRRD), lysine 205, 232 to 235 (CVYN), and glycine 255 contribute to the NAD(+) site.

The protein belongs to the shikimate dehydrogenase family. Homodimer.

It carries out the reaction L-quinate + NAD(+) = 3-dehydroquinate + NADH + H(+). It catalyses the reaction L-quinate + NADP(+) = 3-dehydroquinate + NADPH + H(+). The catalysed reaction is shikimate + NADP(+) = 3-dehydroshikimate + NADPH + H(+). The enzyme catalyses shikimate + NAD(+) = 3-dehydroshikimate + NADH + H(+). Its pathway is metabolic intermediate biosynthesis; chorismate biosynthesis; chorismate from D-erythrose 4-phosphate and phosphoenolpyruvate: step 4/7. The actual biological function of YdiB remains unclear, nor is it known whether 3-dehydroshikimate or quinate represents the natural substrate. Catalyzes the reversible NAD-dependent reduction of both 3-dehydroshikimate (DHSA) and 3-dehydroquinate to yield shikimate (SA) and quinate, respectively. It can use both NAD or NADP for catalysis, however it has higher catalytic efficiency with NAD. The polypeptide is Quinate/shikimate dehydrogenase (Escherichia coli O157:H7).